A 427-amino-acid polypeptide reads, in one-letter code: Adenylosuccinate synthetase (427 aa).

GTP contacts are provided by residues 12–18 (GDEGKGK) and 40–42 (GHT). Asp13 functions as the Proton acceptor in the catalytic mechanism. Mg(2+) is bound by residues Asp13 and Gly40. Residues 13–16 (DEGK), 38–41 (NAGH), Thr131, Arg145, Gln226, Thr241, and Arg305 contribute to the IMP site. The Proton donor role is filled by His41. 301–307 (ATTGRKR) contacts substrate. Residues Arg307, 333–335 (KLD), and 415–417 (SVG) each bind GTP.

It belongs to the adenylosuccinate synthetase family. Homodimer. It depends on Mg(2+) as a cofactor.

The protein resides in the cytoplasm. It carries out the reaction IMP + L-aspartate + GTP = N(6)-(1,2-dicarboxyethyl)-AMP + GDP + phosphate + 2 H(+). It functions in the pathway purine metabolism; AMP biosynthesis via de novo pathway; AMP from IMP: step 1/2. Functionally, plays an important role in the de novo pathway of purine nucleotide biosynthesis. Catalyzes the first committed step in the biosynthesis of AMP from IMP. This Oleidesulfovibrio alaskensis (strain ATCC BAA-1058 / DSM 17464 / G20) (Desulfovibrio alaskensis) protein is Adenylosuccinate synthetase.